A 732-amino-acid chain; its full sequence is Inducible ornithine decarboxylase (732 aa).

K355 is modified (N6-(pyridoxal phosphate)lysine).

It belongs to the Orn/Lys/Arg decarboxylase class-I family. Pyridoxal 5'-phosphate is required as a cofactor.

It carries out the reaction L-ornithine + H(+) = putrescine + CO2. It functions in the pathway amine and polyamine biosynthesis; putrescine biosynthesis via L-ornithine pathway; putrescine from L-ornithine: step 1/1. The first enzyme leading to putrescine and thus polyamine synthesis. The protein is Inducible ornithine decarboxylase of Escherichia coli (strain K12).